The sequence spans 371 residues: tRNA-specific 2-thiouridylase MnmA (371 aa).

ATP is bound by residues 13 to 20 and Met39; that span reads GMSGGVDS. Residues 99–101 are interaction with target base in tRNA; sequence NPD. Catalysis depends on Cys104, which acts as the Nucleophile. Cys104 and Cys200 are disulfide-bonded. Gly128 provides a ligand contact to ATP. The segment at 150–152 is interaction with tRNA; it reads KDQ. Residue Cys200 is the Cysteine persulfide intermediate of the active site. Residues 308 to 309 are interaction with tRNA; sequence RY.

It belongs to the MnmA/TRMU family.

It is found in the cytoplasm. It catalyses the reaction S-sulfanyl-L-cysteinyl-[protein] + uridine(34) in tRNA + AH2 + ATP = 2-thiouridine(34) in tRNA + L-cysteinyl-[protein] + A + AMP + diphosphate + H(+). Its function is as follows. Catalyzes the 2-thiolation of uridine at the wobble position (U34) of tRNA, leading to the formation of s(2)U34. This is tRNA-specific 2-thiouridylase MnmA from Bacillus cereus (strain ATCC 14579 / DSM 31 / CCUG 7414 / JCM 2152 / NBRC 15305 / NCIMB 9373 / NCTC 2599 / NRRL B-3711).